The sequence spans 432 residues: Gamma-glutamyl phosphate reductase (432 aa).

The protein belongs to the gamma-glutamyl phosphate reductase family.

The protein resides in the cytoplasm. It catalyses the reaction L-glutamate 5-semialdehyde + phosphate + NADP(+) = L-glutamyl 5-phosphate + NADPH + H(+). It participates in amino-acid biosynthesis; L-proline biosynthesis; L-glutamate 5-semialdehyde from L-glutamate: step 2/2. Its function is as follows. Catalyzes the NADPH-dependent reduction of L-glutamate 5-phosphate into L-glutamate 5-semialdehyde and phosphate. The product spontaneously undergoes cyclization to form 1-pyrroline-5-carboxylate. This is Gamma-glutamyl phosphate reductase from Methylorubrum populi (strain ATCC BAA-705 / NCIMB 13946 / BJ001) (Methylobacterium populi).